Consider the following 352-residue polypeptide: Ion-translocating oxidoreductase complex subunit D (352 aa).

Helical transmembrane passes span 20–40, 42–62, 89–109, and 123–143; these read IMLL…WFFG, GTLV…ALVL, IPPL…VIIA, and PAMI…TSWL. Thr187 carries the post-translational modification FMN phosphoryl threonine. 5 consecutive transmembrane segments (helical) span residues 214 to 234, 242 to 262, 267 to 287, 301 to 321, and 322 to 342; these read ILAG…GVWL, WHIP…GWLF, LAAP…FFIL, LIFG…GGYP, and DGVA…DYYT.

It belongs to the NqrB/RnfD family. In terms of assembly, the complex is composed of six subunits: RsxA, RsxB, RsxC, RsxD, RsxE and RsxG. The cofactor is FMN.

The protein localises to the cell inner membrane. Functionally, part of a membrane-bound complex that couples electron transfer with translocation of ions across the membrane. Required to maintain the reduced state of SoxR. This is Ion-translocating oxidoreductase complex subunit D from Escherichia coli O127:H6 (strain E2348/69 / EPEC).